The following is a 329-amino-acid chain: NADH-quinone oxidoreductase subunit H (329 aa).

The next 9 helical transmembrane spans lie at 9–29, 42–62, 75–95, 117–137, 154–174, 188–208, 238–258, 269–291, and 309–329; these read LIKI…ATYI, GPCY…IKLF, FIFT…MAPI, IGFL…ILAG, IQLL…LMVV, GGFL…FLIA, LKWG…SFVI, WGFI…LSMW, and WKIM…IILI.

This sequence belongs to the complex I subunit 1 family. In terms of assembly, NDH-1 is composed of 14 different subunits. Subunits NuoA, H, J, K, L, M, N constitute the membrane sector of the complex.

It is found in the cell inner membrane. The catalysed reaction is a quinone + NADH + 5 H(+)(in) = a quinol + NAD(+) + 4 H(+)(out). Functionally, NDH-1 shuttles electrons from NADH, via FMN and iron-sulfur (Fe-S) centers, to quinones in the respiratory chain. The immediate electron acceptor for the enzyme in this species is believed to be ubiquinone. Couples the redox reaction to proton translocation (for every two electrons transferred, four hydrogen ions are translocated across the cytoplasmic membrane), and thus conserves the redox energy in a proton gradient. This subunit may bind ubiquinone. This Helicobacter pylori (strain HPAG1) protein is NADH-quinone oxidoreductase subunit H.